The sequence spans 540 residues: SNW/SKI-interacting protein B (540 aa).

Disordered stretches follow at residues 1–106 (MVLR…SLTV), 215–273 (GETQ…NPKG), 351–402 (GAAP…RDRD), and 502–526 (ASVA…DPFH). 2 stretches are compositionally biased toward basic and acidic residues: residues 16-29 (PHDH…KERY) and 83-94 (MGRRGGDGDGEQ). Positions 189–353 (PEFIKYTPAR…KARAEMLGAA (165 aa)) are SNW. The span at 236–251 (AGSPPVPVLRSPPRPP) shows a compositional bias: pro residues. The segment covering 359–382 (ERSKAAAERDAIREERRRERRLEA) has biased composition (basic and acidic residues). Residues 383–393 (RAAAAAASKKS) are compositionally biased toward low complexity.

This sequence belongs to the SNW family.

It localises to the nucleus. This Oryza sativa subsp. japonica (Rice) protein is SNW/SKI-interacting protein B.